The chain runs to 612 residues: Dihydroxy-acid dehydratase (612 aa).

A Mg(2+)-binding site is contributed by Asp81. Cys122 serves as a coordination point for [2Fe-2S] cluster. Residues Asp123 and Lys124 each coordinate Mg(2+). Lys124 carries the N6-carboxylysine modification. [2Fe-2S] cluster is bound at residue Cys195. Residue Glu491 coordinates Mg(2+). Residue Ser517 is the Proton acceptor of the active site.

The protein belongs to the IlvD/Edd family. As to quaternary structure, homodimer. [2Fe-2S] cluster serves as cofactor. Requires Mg(2+) as cofactor.

The catalysed reaction is (2R)-2,3-dihydroxy-3-methylbutanoate = 3-methyl-2-oxobutanoate + H2O. It carries out the reaction (2R,3R)-2,3-dihydroxy-3-methylpentanoate = (S)-3-methyl-2-oxopentanoate + H2O. Its pathway is amino-acid biosynthesis; L-isoleucine biosynthesis; L-isoleucine from 2-oxobutanoate: step 3/4. It functions in the pathway amino-acid biosynthesis; L-valine biosynthesis; L-valine from pyruvate: step 3/4. Functionally, functions in the biosynthesis of branched-chain amino acids. Catalyzes the dehydration of (2R,3R)-2,3-dihydroxy-3-methylpentanoate (2,3-dihydroxy-3-methylvalerate) into 2-oxo-3-methylpentanoate (2-oxo-3-methylvalerate) and of (2R)-2,3-dihydroxy-3-methylbutanoate (2,3-dihydroxyisovalerate) into 2-oxo-3-methylbutanoate (2-oxoisovalerate), the penultimate precursor to L-isoleucine and L-valine, respectively. The sequence is that of Dihydroxy-acid dehydratase from Haemophilus influenzae (strain PittGG).